We begin with the raw amino-acid sequence, 449 residues long: Tubulin beta chain (449 aa).

Residues Q11, E69, S138, G142, T143, G144, N204, and N226 each contribute to the GTP site. A Mg(2+)-binding site is contributed by E69. Positions 426–449 (QDATAEEEGEFDEEEGEMGAEEGA) are disordered. A compositionally biased stretch (acidic residues) spans 429-449 (TAEEEGEFDEEEGEMGAEEGA).

This sequence belongs to the tubulin family. As to quaternary structure, dimer of alpha and beta chains. A typical microtubule is a hollow water-filled tube with an outer diameter of 25 nm and an inner diameter of 15 nM. Alpha-beta heterodimers associate head-to-tail to form protofilaments running lengthwise along the microtubule wall with the beta-tubulin subunit facing the microtubule plus end conferring a structural polarity. Microtubules usually have 13 protofilaments but different protofilament numbers can be found in some organisms and specialized cells. It depends on Mg(2+) as a cofactor.

It is found in the cytoplasm. The protein localises to the cytoskeleton. In terms of biological role, tubulin is the major constituent of microtubules, a cylinder consisting of laterally associated linear protofilaments composed of alpha- and beta-tubulin heterodimers. Microtubules grow by the addition of GTP-tubulin dimers to the microtubule end, where a stabilizing cap forms. Below the cap, tubulin dimers are in GDP-bound state, owing to GTPase activity of alpha-tubulin. The chain is Tubulin beta chain from Toxoplasma gondii.